Reading from the N-terminus, the 182-residue chain is Peptidoglycan recognition protein 1 (182 aa).

Residues methionine 1–serine 18 form the signal peptide. Cystine bridges form between cysteine 17-cysteine 141, cysteine 33-cysteine 78, and cysteine 54-cysteine 60. The N-acetylmuramoyl-L-alanine amidase domain occupies histidine 39–glycine 167.

It belongs to the N-acetylmuramoyl-L-alanine amidase 2 family. In terms of assembly, homodimer; disulfide-linked. Interacts with HSPA1A; this interaction forms a cytotoxic complex that is released by lymphokine-activated killer cells. Interacts with HSPBP1; this interaction blocks the cytotoxic activity of the PGLYRP1-HSPA1A complex. As to expression, strongly expressed in spleen and lung. Also detected in brain and thymus. In the lung, expressed in the intraalveolar space, in the brain, expressed in the Purkinje cells of the cerebellum and in certain layers of neurons in the hippocampus. Also detected in cells filling the space within the intestinal villus.

It is found in the cytoplasm. It localises to the secreted. In terms of biological role, innate immunity protein that plays several important functions in antimicrobial and antitumor defense systems. Acts as a pattern receptor that binds to murein peptidoglycans (PGN) of Gram-positive bacteria and thus provides bactericidal activity. Forms an equimolar complex with heat shock protein HSPA1A and induces programmed cell death through apoptosis and necroptosis in tumor cell lines by activating the TNFR1 receptor on the target cell membrane. In addition, acts in complex with the Ca(2+)-binding protein S100A4 as a chemoattractant able to induce lymphocyte movement. Mechanistically, this complex acts as a ligand of the chemotactic receptors CCR5 and CXCR3 which are present on the cells of the immune system. Also promotes the activation of lymphocytes that become able to kill virus-infected cells as well as tumor cells by modulating the spectrum of their target-cell specificity. Induction of cytotoxicity on monocyte surface requires interaction with TREM1 receptor. This is Peptidoglycan recognition protein 1 (Pglyrp1) from Mus musculus (Mouse).